Consider the following 1260-residue polypeptide: ATP-dependent helicase/deoxyribonuclease subunit B (1260 aa).

This sequence belongs to the helicase family. AddB/RexB type 2 subfamily. In terms of assembly, heterodimer of AddA and RexB. Requires Mg(2+) as cofactor.

Its function is as follows. The heterodimer acts as both an ATP-dependent DNA helicase and an ATP-dependent, dual-direction single-stranded exonuclease. Recognizes the chi site generating a DNA molecule suitable for the initiation of homologous recombination. This subunit has 5' -&gt; 3' nuclease activity but not helicase activity. The chain is ATP-dependent helicase/deoxyribonuclease subunit B from Limosilactobacillus reuteri (strain DSM 20016) (Lactobacillus reuteri).